The following is a 555-amino-acid chain: Formate--tetrahydrofolate ligase (555 aa).

65–72 (TPAGEGKS) provides a ligand contact to ATP.

This sequence belongs to the formate--tetrahydrofolate ligase family.

The enzyme catalyses (6S)-5,6,7,8-tetrahydrofolate + formate + ATP = (6R)-10-formyltetrahydrofolate + ADP + phosphate. Its pathway is one-carbon metabolism; tetrahydrofolate interconversion. The polypeptide is Formate--tetrahydrofolate ligase (Staphylococcus carnosus (strain TM300)).